The sequence spans 204 residues: dTTP/UTP pyrophosphatase (204 aa).

The active-site Proton acceptor is the Asp68.

It belongs to the Maf family. YhdE subfamily. Requires a divalent metal cation as cofactor.

Its subcellular location is the cytoplasm. The enzyme catalyses dTTP + H2O = dTMP + diphosphate + H(+). It carries out the reaction UTP + H2O = UMP + diphosphate + H(+). In terms of biological role, nucleoside triphosphate pyrophosphatase that hydrolyzes dTTP and UTP. May have a dual role in cell division arrest and in preventing the incorporation of modified nucleotides into cellular nucleic acids. The polypeptide is dTTP/UTP pyrophosphatase (Thermotoga maritima (strain ATCC 43589 / DSM 3109 / JCM 10099 / NBRC 100826 / MSB8)).